The chain runs to 260 residues: Type II methyltransferase M.CviBI (260 aa).

Residues tryptophan 7, lysine 11, aspartate 54, and aspartate 177 each coordinate S-adenosyl-L-methionine.

It belongs to the N(4)/N(6)-methyltransferase family.

It carries out the reaction a 2'-deoxyadenosine in DNA + S-adenosyl-L-methionine = an N(6)-methyl-2'-deoxyadenosine in DNA + S-adenosyl-L-homocysteine + H(+). An alpha subtype methylase, recognizes the double-stranded sequence 5'-GANTC-3', methylates A-2 on both strands, and protects the DNA from cleavage by the CviBI endonuclease. This Paramecium bursaria Chlorella virus NC1A (PBCV-NC1A) protein is Type II methyltransferase M.CviBI.